We begin with the raw amino-acid sequence, 249 residues long: Serine acetyltransferase (249 aa).

It belongs to the transferase hexapeptide repeat family.

Its subcellular location is the cytoplasm. The enzyme catalyses L-serine + acetyl-CoA = O-acetyl-L-serine + CoA. It functions in the pathway amino-acid biosynthesis; L-cysteine biosynthesis; L-cysteine from L-serine: step 1/2. The sequence is that of Serine acetyltransferase (cysE) from Synechocystis sp. (strain ATCC 27184 / PCC 6803 / Kazusa).